Reading from the N-terminus, the 226-residue chain is Imidazole glycerol phosphate synthase subunit HisH (226 aa).

One can recognise a Glutamine amidotransferase type-1 domain in the interval 6–214; sequence NIALVDYGVG…VERAASRSAA (209 aa). C84 functions as the Nucleophile in the catalytic mechanism. Active-site residues include H189 and E191.

Heterodimer of HisH and HisF.

The protein localises to the cytoplasm. The enzyme catalyses 5-[(5-phospho-1-deoxy-D-ribulos-1-ylimino)methylamino]-1-(5-phospho-beta-D-ribosyl)imidazole-4-carboxamide + L-glutamine = D-erythro-1-(imidazol-4-yl)glycerol 3-phosphate + 5-amino-1-(5-phospho-beta-D-ribosyl)imidazole-4-carboxamide + L-glutamate + H(+). It carries out the reaction L-glutamine + H2O = L-glutamate + NH4(+). It participates in amino-acid biosynthesis; L-histidine biosynthesis; L-histidine from 5-phospho-alpha-D-ribose 1-diphosphate: step 5/9. Functionally, IGPS catalyzes the conversion of PRFAR and glutamine to IGP, AICAR and glutamate. The HisH subunit catalyzes the hydrolysis of glutamine to glutamate and ammonia as part of the synthesis of IGP and AICAR. The resulting ammonia molecule is channeled to the active site of HisF. This is Imidazole glycerol phosphate synthase subunit HisH from Gloeobacter violaceus (strain ATCC 29082 / PCC 7421).